The primary structure comprises 542 residues: Putative inactive cadmium/zinc-transporting ATPase HMA3 (542 aa).

Residues 1–89 (MAEGEESKKM…VRPYGETSLK (89 aa)) are Cytoplasmic-facing. An HMA domain is found at 13-79 (QTSYFDVVGI…ALNQARLEAS (67 aa)). The helical transmembrane segment at 90-111 (SQWPSPFAIVSGVLLVLSFFKY) threads the bilayer. Over 112–114 (FYS) the chain is Extracellular. The helical transmembrane segment at 115-134 (PLEWLAIVAVVAGVFPILAK) threads the bilayer. Over 135–141 (AVASVTR) the chain is Cytoplasmic. A helical membrane pass occupies residues 142–162 (FRLDINALTLIAVIATLCMQD). A topological domain (extracellular) is located at residue Phe163. The helical transmembrane segment at 164-184 (TEAATIVFLFSVADWLESSAA) threads the bilayer. The Cytoplasmic segment spans residues 185 to 310 (HKASIVMSSL…QTKTQRFIDK (126 aa)). Residues 311 to 333 (CSRYYTPAVVVSAACFAVIPVLL) form a helical membrane-spanning segment. Residues 334-341 (KVQDLSHW) lie on the Extracellular side of the membrane. The chain crosses the membrane as a helical span at residues 342–359 (FHLALVVLVSGCPCGLIL). At 360–542 (STPVATFCAL…VAQALKELKS (183 aa)) the chain is on the cytoplasmic side.

This sequence belongs to the cation transport ATPase (P-type) (TC 3.A.3) family. Type IB subfamily.

The protein resides in the membrane. The sequence is that of Putative inactive cadmium/zinc-transporting ATPase HMA3 (HMA3) from Arabidopsis thaliana (Mouse-ear cress).